Consider the following 514-residue polypeptide: Triacylglyceride transporter MAB_2807 (514 aa).

11 helical membrane-spanning segments follow: residues 19-39 (IAIG…YVVV), 58-78 (QVTP…PLLG), 88-108 (LILQ…ALST), 118-138 (VIQG…GADL), 157-177 (LGSV…GSWT), 178-198 (AIFW…QFSV), 210-230 (VDVV…VGLY), 239-259 (LPEW…AFIL), 278-298 (PFFA…VTLV), 316-336 (VFLL…GGWL), and 344-364 (IIAV…SGWP). A beta-hairpin region spans residues 371–380 (VHNFGFFTLP). The next 3 helical transmembrane spans lie at 385 to 405 (DLVV…SAAL), 420 to 440 (VVVA…GWGI), and 485 to 505 (MFAI…FVGS).

This sequence belongs to the major facilitator superfamily. P55 (TC 2.A.1.3.34) family.

The protein localises to the cell inner membrane. In terms of biological role, in association with lipoprotein LprG probably transports triacyglycerides (TAG) across the inner cell membrane into the periplasm; TAG probably regulates lipid metabolism and growth regulation and plays a structural role in the outer membrane. TAG (and maybe other lipids) enters the central cavity of the P55 transporter from within the cell inner membrane via clefts on the cytoplasmic face of P55 between TM5-TM8 and TM2-TM11. From there the lipid is probably transferred to the hydrophobic cavity of LprG. Involved in drug susceptibilty, its expression partially complements the antibiotic susceptibilty of a double lprG-mfs deletion. Probably does not function as a bona fide drug efflux pump, but instead plays a role in outer membrane biogenesis. Probably required with LprG for normal surface localization of lipoarabinomannan (LAM). This chain is Triacylglyceride transporter MAB_2807, found in Mycobacteroides abscessus (strain ATCC 19977 / DSM 44196 / CCUG 20993 / CIP 104536 / JCM 13569 / NCTC 13031 / TMC 1543 / L948) (Mycobacterium abscessus).